Here is a 253-residue protein sequence, read N- to C-terminus: uncharacterized protein (253 aa).

The 70-residue stretch at 4–73 (FGKSTADRVK…IDVSGVTVLQ (70 aa)) folds into the BON 1 domain. The segment covering 79-93 (AAQTAPTTPAQTSPS) has biased composition (low complexity). A disordered region spans residues 79–105 (AAQTAPTTPAQTSPSVQDSPSTPVQMP). The region spanning 119–188 (DTSRIAKAVL…VDISGLRVAQ (70 aa)) is the BON 2 domain. The LysM domain maps to 204 to 251 (TVYTVKPGDSLSKIAEHYYGDQMEYKKIAHYNNISNPDLIQPGQKLRI).

This is an uncharacterized protein from Deinococcus radiodurans (strain ATCC 13939 / DSM 20539 / JCM 16871 / CCUG 27074 / LMG 4051 / NBRC 15346 / NCIMB 9279 / VKM B-1422 / R1).